Consider the following 92-residue polypeptide: Small ribosomal subunit protein uS19c (92 aa).

Belongs to the universal ribosomal protein uS19 family.

It localises to the plastid. The protein resides in the chloroplast. Functionally, protein S19 forms a complex with S13 that binds strongly to the 16S ribosomal RNA. In Physcomitrium patens (Spreading-leaved earth moss), this protein is Small ribosomal subunit protein uS19c.